Here is a 670-residue protein sequence, read N- to C-terminus: Auxin response factor 16 (670 aa).

The segment at residues 120 to 222 is a DNA-binding region (TF-B3); that stretch reads FAKTLTQSDA…DLCVGIRRAK (103 aa). Residues 545 to 557 are compositionally biased toward polar residues; the sequence is KTQISSGGSNQNG. The tract at residues 545-579 is disordered; it reads KTQISSGGSNQNGVAGREFSSSDEGSPCSKKVHDA. Residues 584–664 form the PB1 domain; it reads TGHCKVFMES…RRLTILTEQG (81 aa).

It belongs to the ARF family. In terms of assembly, homodimers and heterodimers.

It is found in the nucleus. Its function is as follows. Auxin response factors (ARFs) are transcriptional factors that bind specifically to the DNA sequence 5'-TGTCTC-3' found in the auxin-responsive promoter elements (AuxREs). Could act as transcriptional activator or repressor. Formation of heterodimers with Aux/IAA proteins may alter their ability to modulate early auxin response genes expression. The chain is Auxin response factor 16 (ARF16) from Arabidopsis thaliana (Mouse-ear cress).